The sequence spans 202 residues: Small ribosomal subunit protein uS4 (202 aa).

An S4 RNA-binding domain is found at 94–157; it reads SRLDSLVYRA…LEMPLIKNTL (64 aa).

This sequence belongs to the universal ribosomal protein uS4 family. Part of the 30S ribosomal subunit. Contacts protein S5. The interaction surface between S4 and S5 is involved in control of translational fidelity.

One of the primary rRNA binding proteins, it binds directly to 16S rRNA where it nucleates assembly of the body of the 30S subunit. Functionally, with S5 and S12 plays an important role in translational accuracy. This Ureaplasma urealyticum serovar 10 (strain ATCC 33699 / Western) protein is Small ribosomal subunit protein uS4.